The primary structure comprises 80 residues: Myrmicitoxin(1)-Pr1a (80 aa).

A signal peptide spans 1–23 (MEIPKLLYIAVIAIGLSGSLTWA). Residues 24 to 57 (TPLANPLAEAEAEAKATAEATAEALAEALAEPEP) constitute a propeptide that is removed on maturation. A Phenylalanine amide modification is found at F79.

Belongs to the formicidae venom clade 1 family. In terms of tissue distribution, expressed by the venom gland.

The protein resides in the secreted. Vertebrate-selective toxin that causes pain by targeting voltage-gated sodium channels. The chain is Myrmicitoxin(1)-Pr1a from Pogonomyrmex rugosus (Desert harvester ant).